The sequence spans 280 residues: Elongation factor 1-delta (280 aa).

Position 2 is an N-acetylalanine (alanine 2). An N6-acetyllysine modification is found at lysine 17. Residues serine 37, serine 44, serine 60, serine 86, and serine 106 each carry the phosphoserine modification. Residue lysine 107 is modified to N6-acetyllysine. Residues 113–171 are disordered; it reads SALEKSSPAHRATTPQTQHVSPMRQVEPPSRKAATATEDDEDDDIDLFGSDEEEDKEAT. An N6-acetyllysine; alternate modification is found at lysine 117. Lysine 117 is modified (N6-succinyllysine; alternate). Serine 119 is subject to Phosphoserine. Threonine 129 bears the Phosphothreonine mark. Residue serine 133 is modified to Phosphoserine. Phosphothreonine is present on threonine 147. Acidic residues predominate over residues 149–168; the sequence is TEDDEDDDIDLFGSDEEEDK. Position 162 is a phosphoserine; by CK2 (serine 162).

This sequence belongs to the EF-1-beta/EF-1-delta family. EF-1 is composed of 4 subunits: alpha, beta, delta, and gamma.

Functionally, EF-1-beta and EF-1-delta stimulate the exchange of GDP bound to EF-1-alpha to GTP. The protein is Elongation factor 1-delta (EEF1D) of Bos taurus (Bovine).